A 21-amino-acid polypeptide reads, in one-letter code: Snake venom serine protease jerdonase (21 aa).

In terms of domain architecture, Peptidase S1 spans 1–21 (IIGGDECNINEHPFLVALYDA).

This sequence belongs to the peptidase S1 family. Snake venom subfamily. In terms of assembly, monomer. In terms of processing, glycosylated; contains 35.8% neutral carbohydrate. Expressed by the venom gland.

The protein resides in the secreted. Its activity is regulated as follows. Inhibited by PMSF and soybean trypsin inhibitor. Partially inhibited by L-cysteine and DTT. Not affected by EDTA. In terms of biological role, multifunctional venom serine protease that has fibrino(geno)lytic activity towards the A alpha-chain of human fibrinogen (FGA) and a slow activity towards the B beta-chain (FGB). Also hydrolyzes bovine low-molecular-mass kininogen and releases bradykinin. Catalyzes the hydrolysis of BAEE, S-2238 and S-2302. The polypeptide is Snake venom serine protease jerdonase (Protobothrops jerdonii (Jerdon's pitviper)).